Reading from the N-terminus, the 227-residue chain is Protein FAM3C (227 aa).

Residues 1 to 24 (MRVAGAAKLVVAVAVFLLTFYVIS) form the signal peptide. 2 disulfide bridges follow: Cys-58–Cys-86 and Cys-64–Cys-221. The GG-type lectin domain maps to 67–225 (KHFAFKMASG…VEMEGCIPQK (159 aa)).

Belongs to the FAM3 family.

The protein resides in the secreted. The protein localises to the cytoplasmic vesicle. Functionally, may be involved in retinal laminar formation. Promotes epithelial to mesenchymal transition. The polypeptide is Protein FAM3C (Fam3c) (Rattus norvegicus (Rat)).